The following is a 512-amino-acid chain: ETS translocation variant 3 (512 aa).

Residues Ile35–Asn116 constitute a DNA-binding region (ETS). The interval Gln138–Asp196 is disordered. Ser139, Ser159, and Ser315 each carry phosphoserine. The segment covering His158–Gly184 has biased composition (polar residues). The interval Gln341–Ala512 is disordered. The span at Ile380–Glu406 shows a compositional bias: basic and acidic residues. Lys381 participates in a covalent cross-link: Glycyl lysine isopeptide (Lys-Gly) (interchain with G-Cter in SUMO2). Residue Lys388 is modified to N6-acetyllysine; alternate. Lys388 is covalently cross-linked (Glycyl lysine isopeptide (Lys-Gly) (interchain with G-Cter in SUMO2); alternate). Over residues Glu443–Glu452 the composition is skewed to acidic residues. Basic and acidic residues-rich tracts occupy residues Asp453 to Ala468 and Arg479 to Lys491.

This sequence belongs to the ETS family.

Its subcellular location is the nucleus. Its function is as follows. Transcriptional repressor that contribute to growth arrest during terminal macrophage differentiation by repressing target genes involved in Ras-dependent proliferation. Represses MMP1 promoter activity. The protein is ETS translocation variant 3 (ETV3) of Ateles geoffroyi (Black-handed spider monkey).